A 115-amino-acid polypeptide reads, in one-letter code: NADH-ubiquinone oxidoreductase chain 3 (115 aa).

3 helical membrane-spanning segments follow: residues Met-1–Leu-21, Ile-58–Ile-78, and Ile-84–Tyr-104.

It belongs to the complex I subunit 3 family.

The protein resides in the mitochondrion membrane. It catalyses the reaction a ubiquinone + NADH + 5 H(+)(in) = a ubiquinol + NAD(+) + 4 H(+)(out). Its function is as follows. Core subunit of the mitochondrial membrane respiratory chain NADH dehydrogenase (Complex I) that is believed to belong to the minimal assembly required for catalysis. Complex I functions in the transfer of electrons from NADH to the respiratory chain. The immediate electron acceptor for the enzyme is believed to be ubiquinone. The sequence is that of NADH-ubiquinone oxidoreductase chain 3 (ND3) from Locusta migratoria (Migratory locust).